The following is a 54-amino-acid chain: Large ribosomal subunit protein bL32c (54 aa).

It belongs to the bacterial ribosomal protein bL32 family.

It is found in the plastid. It localises to the chloroplast. The polypeptide is Large ribosomal subunit protein bL32c (Gossypium barbadense (Sea Island cotton)).